Reading from the N-terminus, the 371-residue chain is MFPKIMNDENFFKKAAAHGEEPPLTPQNEHQRSGLRFARRVRLPRAVGLAGMFLPIASTLVSHPPPGWWWLVLVGWAFVWPHLAWQIASRAVDPLSREIYNLKTDAVLAGMWVGVMGVNVLPSTAMLMIMCLNLMGAGGPRLFVAGLVLMVVSCLVTLELTGITVSFNSAPLEWWLSLPIIVIYPLLFGWVSYQTATKLAEHKRRLQVMSTRDGMTGVYNRRHWETMLRNEFDNCRRHNRDATLLIIDIDHFKSINDTWGHDVGDEAIVALTRQLQITLRGSDVIGRFGGDEFAVIMSGTPAESAITAMLRVHEGLNTLRLPNTPQVTLRISVGVAPLNPQMSHYREWLKSADLALYKAKKAGRNRTEVAA.

The next 5 helical transmembrane spans lie at 46–66 (AVGL…HPPP), 68–88 (WWWL…WQIA), 112–132 (WVGV…IMCL), 143–163 (FVAG…LTGI), and 171–191 (PLEW…FGWV). Residues 240–371 (RDATLLIIDI…AGRNRTEVAA (132 aa)) enclose the GGDEF domain. Residues aspartate 248 and isoleucine 249 each contribute to the Mg(2+) site. Residues asparagine 256 and aspartate 265 each contribute to the substrate site. Aspartate 291 is a binding site for Mg(2+).

The cofactor is Mg(2+).

It localises to the cell inner membrane. The catalysed reaction is 2 GTP = 3',3'-c-di-GMP + 2 diphosphate. It functions in the pathway purine metabolism; 3',5'-cyclic di-GMP biosynthesis. Its function is as follows. A probable diguanylate cyclase. The last member of a cascade of expressed proteins, its expression requires DgcM. DgcC production induces biosynthesis of cellulose in some E.coli isolates, but not in K12 strains. Cyclic-di-GMP is a second messenger which controls cell surface-associated traits in bacteria. The sequence is that of Probable diguanylate cyclase DgcC from Escherichia coli (strain K12).